An 84-amino-acid polypeptide reads, in one-letter code: ATP synthase subunit c (84 aa).

A run of 2 helical transmembrane segments spans residues 9–29 (IIGA…GFAI) and 54–74 (IVAG…LLFI).

Belongs to the ATPase C chain family. As to quaternary structure, F-type ATPases have 2 components, F(1) - the catalytic core - and F(0) - the membrane proton channel. F(1) has five subunits: alpha(3), beta(3), gamma(1), delta(1), epsilon(1). F(0) has three main subunits: a(1), b(2) and c(10-14). The alpha and beta chains form an alternating ring which encloses part of the gamma chain. F(1) is attached to F(0) by a central stalk formed by the gamma and epsilon chains, while a peripheral stalk is formed by the delta and b chains.

The protein resides in the cell inner membrane. Functionally, f(1)F(0) ATP synthase produces ATP from ADP in the presence of a proton or sodium gradient. F-type ATPases consist of two structural domains, F(1) containing the extramembraneous catalytic core and F(0) containing the membrane proton channel, linked together by a central stalk and a peripheral stalk. During catalysis, ATP synthesis in the catalytic domain of F(1) is coupled via a rotary mechanism of the central stalk subunits to proton translocation. Key component of the F(0) channel; it plays a direct role in translocation across the membrane. A homomeric c-ring of between 10-14 subunits forms the central stalk rotor element with the F(1) delta and epsilon subunits. In Haemophilus influenzae (strain ATCC 51907 / DSM 11121 / KW20 / Rd), this protein is ATP synthase subunit c.